A 234-amino-acid polypeptide reads, in one-letter code: ATP-dependent dethiobiotin synthetase BioD (234 aa).

ATP is bound at residue Gly14 to Ile19. Residue Thr18 participates in Mg(2+) binding. Lys39 is an active-site residue. A substrate-binding site is contributed by Ser43. Residues Asp56, Glu118–Gly121, Asn178–His179, and Pro208–Leu210 each bind ATP. Residues Asp56 and Glu118 each coordinate Mg(2+).

The protein belongs to the dethiobiotin synthetase family. As to quaternary structure, homodimer. Requires Mg(2+) as cofactor.

Its subcellular location is the cytoplasm. It catalyses the reaction (7R,8S)-7,8-diammoniononanoate + CO2 + ATP = (4R,5S)-dethiobiotin + ADP + phosphate + 3 H(+). It functions in the pathway cofactor biosynthesis; biotin biosynthesis; biotin from 7,8-diaminononanoate: step 1/2. Functionally, catalyzes a mechanistically unusual reaction, the ATP-dependent insertion of CO2 between the N7 and N8 nitrogen atoms of 7,8-diaminopelargonic acid (DAPA, also called 7,8-diammoniononanoate) to form a ureido ring. The sequence is that of ATP-dependent dethiobiotin synthetase BioD from Marinobacter nauticus (strain ATCC 700491 / DSM 11845 / VT8) (Marinobacter aquaeolei).